The sequence spans 217 residues: 7-cyano-7-deazaguanine synthase (217 aa).

Position 10-20 (10-20 (FSGGQDSTTCL)) interacts with ATP. Residues Cys-185, Cys-194, Cys-197, and Cys-200 each coordinate Zn(2+).

The protein belongs to the QueC family. In terms of assembly, homodimer. Zn(2+) serves as cofactor.

The catalysed reaction is 7-carboxy-7-deazaguanine + NH4(+) + ATP = 7-cyano-7-deazaguanine + ADP + phosphate + H2O + H(+). It functions in the pathway purine metabolism; 7-cyano-7-deazaguanine biosynthesis. Functionally, catalyzes the ATP-dependent conversion of 7-carboxy-7-deazaguanine (CDG) to 7-cyano-7-deazaguanine (preQ(0)). The chain is 7-cyano-7-deazaguanine synthase from Streptococcus thermophilus (strain ATCC BAA-491 / LMD-9).